Here is a 280-residue protein sequence, read N- to C-terminus: MDENKIIEVAHLKYEYPQASRLALNDLSVSINAGEWVAIIGHNGSGKSTFAKSLNGLLDLQSGDITIDGLPLSIETVWDIRRKIGMVFQNPDNQFVGATVEDDVAFGLENQGIERTEMQRRVQDAVDRVGMTQFMTREPSRLSGGQKQRVALAGIIAQQPEILILDEATSMLDPKGRQEVLETIHTLKQETNMTVLSITHDIDEAASADRIVMLDKGQVIDQGTPAEIFAYGQRLLDLGLDVPYPEKLKAALTKLGVPMPVDYLTTERMVDHLWTLHSKM.

The 235-residue stretch at 7 to 241 (IEVAHLKYEY…GQRLLDLGLD (235 aa)) folds into the ABC transporter domain. ATP is bound at residue 41 to 48 (GHNGSGKS).

This sequence belongs to the ABC transporter superfamily. Energy-coupling factor EcfA family. As to quaternary structure, forms a stable energy-coupling factor (ECF) transporter complex composed of 2 membrane-embedded substrate-binding proteins (S component), 2 ATP-binding proteins (A component) and 2 transmembrane proteins (T component).

It localises to the cell membrane. In terms of biological role, ATP-binding (A) component of a common energy-coupling factor (ECF) ABC-transporter complex. Unlike classic ABC transporters this ECF transporter provides the energy necessary to transport a number of different substrates. In Latilactobacillus sakei subsp. sakei (strain 23K) (Lactobacillus sakei subsp. sakei), this protein is Energy-coupling factor transporter ATP-binding protein EcfA1.